The chain runs to 488 residues: Protein nucleotidyltransferase YdiU (488 aa).

Residues Gly91, Gly93, Arg94, Lys114, Asp126, Gly127, Arg177, and Arg184 each coordinate ATP. The active-site Proton acceptor is Asp253. Residues Asn254 and Asp263 each contribute to the Mg(2+) site. Asp263 provides a ligand contact to ATP.

This sequence belongs to the SELO family. Mg(2+) is required as a cofactor. It depends on Mn(2+) as a cofactor.

The catalysed reaction is L-seryl-[protein] + ATP = 3-O-(5'-adenylyl)-L-seryl-[protein] + diphosphate. The enzyme catalyses L-threonyl-[protein] + ATP = 3-O-(5'-adenylyl)-L-threonyl-[protein] + diphosphate. It catalyses the reaction L-tyrosyl-[protein] + ATP = O-(5'-adenylyl)-L-tyrosyl-[protein] + diphosphate. It carries out the reaction L-histidyl-[protein] + UTP = N(tele)-(5'-uridylyl)-L-histidyl-[protein] + diphosphate. The catalysed reaction is L-seryl-[protein] + UTP = O-(5'-uridylyl)-L-seryl-[protein] + diphosphate. The enzyme catalyses L-tyrosyl-[protein] + UTP = O-(5'-uridylyl)-L-tyrosyl-[protein] + diphosphate. Functionally, nucleotidyltransferase involved in the post-translational modification of proteins. It can catalyze the addition of adenosine monophosphate (AMP) or uridine monophosphate (UMP) to a protein, resulting in modifications known as AMPylation and UMPylation. The polypeptide is Protein nucleotidyltransferase YdiU (Bacillus cereus (strain B4264)).